The following is a 428-amino-acid chain: uncharacterized protein (428 aa).

12 helical membrane-spanning segments follow: residues 14 to 34 (LYDWANSAYSIVVTTAVFPLF), 55 to 75 (YTIAISTFILAMLGPILGTIA), 84 to 104 (FFGFFVSAGVASTAMLAFIPS), 107 to 127 (WLLLLLFYTVSAIGFSGANVF), 149 to 169 (FGLGYIGSTIPFIISIAVILL), 182 to 202 (ASQLSFFITAAWWGLFTIPMI), 238 to 258 (LFLFLLAYFFYIDGVGTIITM), 272 to 292 (SLLIILFVTQVVAAPFSIIYG), 302 to 322 (TMLYVGIVIYMIVCVYAYFME), 324 to 344 (TLDFWILAMLVATSQGGIQAL), 361 to 381 (FFGFYNIFGKFASIMGPLLIA), and 392 to 412 (TAVFSLIILFVIGIVILAFVP).

It belongs to the major facilitator superfamily.

It is found in the cell membrane. This is an uncharacterized protein from Bacillus subtilis (strain 168).